The sequence spans 212 residues: Glycerol-3-phosphate acyltransferase (212 aa).

5 helical membrane-spanning segments follow: residues 9-29 (AACLVPVILTALLLLAIGYLL), 67-87 (GPALVVFLIDVGKGALAVLLA), 95-115 (WLQVLAGLAALAGHIWPVWLG), 128-148 (MFLGLAWPVGLACFGLFMAVI), and 168-190 (LMVVSGGSSAYVVVSLVASLMVL).

This sequence belongs to the PlsY family. In terms of assembly, probably interacts with PlsX.

It localises to the cell inner membrane. It catalyses the reaction an acyl phosphate + sn-glycerol 3-phosphate = a 1-acyl-sn-glycero-3-phosphate + phosphate. It participates in lipid metabolism; phospholipid metabolism. Catalyzes the transfer of an acyl group from acyl-phosphate (acyl-PO(4)) to glycerol-3-phosphate (G3P) to form lysophosphatidic acid (LPA). This enzyme utilizes acyl-phosphate as fatty acyl donor, but not acyl-CoA or acyl-ACP. The polypeptide is Glycerol-3-phosphate acyltransferase (Parasynechococcus marenigrum (strain WH8102)).